The sequence spans 574 residues: Pre-mRNA-processing protein 45 (574 aa).

Disordered stretches follow at residues 1-46, 203-234, 350-406, 478-503, and 549-574; these read MAAL…WKPK, PPRFKHKKIPRGPAEPPPPVLQSPPRAATAQD, ETGI…SEMR, AGSSRNDESFGGGTEEGIKEEMSKDR, and MDAARRGGKRTAEDRDEERRKRARDE. 2 stretches are compositionally biased toward pro residues: residues 24–33 and 215–224; these read APLPTTPGPQ and PAEPPPPVLQ. Positions 363-377 are enriched in acidic residues; it reads GSEEESDEEEEDEEA. 3 stretches are compositionally biased toward basic and acidic residues: residues 378 to 397, 493 to 503, and 558 to 574; these read IRERNIVREEKRREREKEMR, EGIKEEMSKDR, and RTAEDRDEERRKRARDE.

It belongs to the SNW family. Associated with the spliceosome.

The protein resides in the nucleus. Involved in pre-mRNA splicing. The polypeptide is Pre-mRNA-processing protein 45 (PRP45) (Cryptococcus neoformans var. neoformans serotype D (strain JEC21 / ATCC MYA-565) (Filobasidiella neoformans)).